Here is a 429-residue protein sequence, read N- to C-terminus: MATEQRPFHLVVFGASGFTGQFVTEEVAREQVDPERSSRLPWAVAGRSREKLQRVLEKAALKLGRPTLSSEVGIIICDIANPASLDEMAKQATVVLNCVGPYRFYGEPVIKACIENGASCIDISGEPQFLELMQLKYHEKAADKGVYIIGSSGFDSIPADLGVIYTRNKMNGTLTAVESFLTIHSGPEGLSIHDGTWKSAIYGFGDQSNLRKLRNVSNLKPVPLIGPKLKRRWPISYCRELKGYSIPFMGSDVSVVRRTQRYLYENLEESPVQYAAYVTVGGITSVIKLMFAGLFFLFFVRFGIGRQLLIKFPWFFSFGYFSKQGPTQKQIDAASFTLTFFGQGYSQGTGTDKNKPNIKICTQVKGPEAGYVATPIAMVQAAMTLLSDASHLPKAGGVFTPGAAFSKTKLIDRLNKHGIEFSVISSSEV.

Ala2 carries the post-translational modification N-acetylalanine. Residue Ser217 is modified to Phosphoserine.

Belongs to the saccharopine dehydrogenase family.

The protein is Saccharopine dehydrogenase-like oxidoreductase (SCCPDH) of Homo sapiens (Human).